The chain runs to 229 residues: 2-C-methyl-D-erythritol 4-phosphate cytidylyltransferase (229 aa).

This sequence belongs to the IspD/TarI cytidylyltransferase family. IspD subfamily.

It carries out the reaction 2-C-methyl-D-erythritol 4-phosphate + CTP + H(+) = 4-CDP-2-C-methyl-D-erythritol + diphosphate. It functions in the pathway isoprenoid biosynthesis; isopentenyl diphosphate biosynthesis via DXP pathway; isopentenyl diphosphate from 1-deoxy-D-xylulose 5-phosphate: step 2/6. In terms of biological role, catalyzes the formation of 4-diphosphocytidyl-2-C-methyl-D-erythritol from CTP and 2-C-methyl-D-erythritol 4-phosphate (MEP). In Clostridium botulinum (strain Langeland / NCTC 10281 / Type F), this protein is 2-C-methyl-D-erythritol 4-phosphate cytidylyltransferase.